We begin with the raw amino-acid sequence, 119 residues long: Small ribosomal subunit protein bS16 (119 aa).

It belongs to the bacterial ribosomal protein bS16 family.

The protein is Small ribosomal subunit protein bS16 of Chlamydia abortus (strain DSM 27085 / S26/3) (Chlamydophila abortus).